We begin with the raw amino-acid sequence, 294 residues long: 4-hydroxy-tetrahydrodipicolinate synthase (294 aa).

T47 contributes to the pyruvate binding site. Y136 functions as the Proton donor/acceptor in the catalytic mechanism. K164 serves as the catalytic Schiff-base intermediate with substrate. Position 206 (V206) interacts with pyruvate.

Belongs to the DapA family. In terms of assembly, homotetramer; dimer of dimers.

The protein resides in the cytoplasm. The catalysed reaction is L-aspartate 4-semialdehyde + pyruvate = (2S,4S)-4-hydroxy-2,3,4,5-tetrahydrodipicolinate + H2O + H(+). It functions in the pathway amino-acid biosynthesis; L-lysine biosynthesis via DAP pathway; (S)-tetrahydrodipicolinate from L-aspartate: step 3/4. Catalyzes the condensation of (S)-aspartate-beta-semialdehyde [(S)-ASA] and pyruvate to 4-hydroxy-tetrahydrodipicolinate (HTPA). The polypeptide is 4-hydroxy-tetrahydrodipicolinate synthase (Acaryochloris marina (strain MBIC 11017)).